A 346-amino-acid polypeptide reads, in one-letter code: Holliday junction branch migration complex subunit RuvB (346 aa).

Residues 1-182 (MSEAARLIAP…FGIPVRLNFY (182 aa)) form a large ATPase domain (RuvB-L) region. Residues arginine 22, glycine 63, lysine 66, threonine 67, threonine 68, 129-131 (EDF), arginine 172, tyrosine 182, and arginine 219 contribute to the ATP site. Threonine 67 lines the Mg(2+) pocket. The tract at residues 183–253 (TVEELELIVR…IADEALTRLL (71 aa)) is small ATPAse domain (RuvB-S). The tract at residues 256 to 346 (SMGLDQLDRR…SQFRLTLEDD (91 aa)) is head domain (RuvB-H). The DNA site is built by arginine 292, arginine 311, and arginine 316.

Belongs to the RuvB family. Homohexamer. Forms an RuvA(8)-RuvB(12)-Holliday junction (HJ) complex. HJ DNA is sandwiched between 2 RuvA tetramers; dsDNA enters through RuvA and exits via RuvB. An RuvB hexamer assembles on each DNA strand where it exits the tetramer. Each RuvB hexamer is contacted by two RuvA subunits (via domain III) on 2 adjacent RuvB subunits; this complex drives branch migration. In the full resolvosome a probable DNA-RuvA(4)-RuvB(12)-RuvC(2) complex forms which resolves the HJ.

It is found in the cytoplasm. The enzyme catalyses ATP + H2O = ADP + phosphate + H(+). In terms of biological role, the RuvA-RuvB-RuvC complex processes Holliday junction (HJ) DNA during genetic recombination and DNA repair, while the RuvA-RuvB complex plays an important role in the rescue of blocked DNA replication forks via replication fork reversal (RFR). RuvA specifically binds to HJ cruciform DNA, conferring on it an open structure. The RuvB hexamer acts as an ATP-dependent pump, pulling dsDNA into and through the RuvAB complex. RuvB forms 2 homohexamers on either side of HJ DNA bound by 1 or 2 RuvA tetramers; 4 subunits per hexamer contact DNA at a time. Coordinated motions by a converter formed by DNA-disengaged RuvB subunits stimulates ATP hydrolysis and nucleotide exchange. Immobilization of the converter enables RuvB to convert the ATP-contained energy into a lever motion, pulling 2 nucleotides of DNA out of the RuvA tetramer per ATP hydrolyzed, thus driving DNA branch migration. The RuvB motors rotate together with the DNA substrate, which together with the progressing nucleotide cycle form the mechanistic basis for DNA recombination by continuous HJ branch migration. Branch migration allows RuvC to scan DNA until it finds its consensus sequence, where it cleaves and resolves cruciform DNA. The sequence is that of Holliday junction branch migration complex subunit RuvB from Rhizobium meliloti (strain 1021) (Ensifer meliloti).